The chain runs to 333 residues: Na(+)-translocating ferredoxin:NAD(+) oxidoreductase complex subunit B (333 aa).

The hydrophobic stretch occupies residues 1-27 (MLNAILVPVGILGVFGLIFGIGLAIAA). The region spanning 33–92 (YEDPRVPLVRAALPGANCGGCGLPGCDALAANIVGGSAAIDACPVGGASCAAAVAEIMGM) is the 4Fe-4S domain. [4Fe-4S] cluster is bound by residues Cys-50, Cys-53, Cys-58, Cys-75, Cys-138, Cys-142, Cys-148, Cys-152, Cys-172, Cys-175, Cys-178, Cys-182, Cys-217, Cys-220, Cys-223, Cys-227, Cys-246, Cys-249, Cys-252, Cys-256, Cys-279, Cys-282, Cys-285, Cys-289, Cys-310, Cys-313, Cys-316, and Cys-320. 6 consecutive 4Fe-4S ferredoxin-type domains span residues 126–162 (REAM…IGED), 163–192 (GLPK…LVPE), 207–237 (KIAR…VENN), 239–266 (AKID…GDVE), 270–299 (STAY…GEIK), and 301–330 (PPYV…MRPN).

This sequence belongs to the 4Fe4S bacterial-type ferredoxin family. RnfB subfamily. As to quaternary structure, the complex is composed of six subunits: RnfA, RnfB, RnfC, RnfD, RnfE and RnfG. It depends on [4Fe-4S] cluster as a cofactor.

It is found in the cell membrane. It catalyses the reaction 2 reduced [2Fe-2S]-[ferredoxin] + Na(+)(in) + NAD(+) + H(+) = 2 oxidized [2Fe-2S]-[ferredoxin] + Na(+)(out) + NADH. Its function is as follows. Part of a membrane-bound complex that couples electron transfer with translocation of ions across the membrane. Couples electron transfer from reduced ferredoxin to NAD(+) with electrogenic movement of Na(+) out of the cell. Involved in caffeate respiration. The chain is Na(+)-translocating ferredoxin:NAD(+) oxidoreductase complex subunit B from Acetobacterium woodii (strain ATCC 29683 / DSM 1030 / JCM 2381 / KCTC 1655 / WB1).